The sequence spans 513 residues: ATP synthase subunit alpha (513 aa).

Position 169 to 176 (169 to 176) interacts with ATP; that stretch reads GDRQTGKT.

Belongs to the ATPase alpha/beta chains family. As to quaternary structure, F-type ATPases have 2 components, CF(1) - the catalytic core - and CF(0) - the membrane proton channel. CF(1) has five subunits: alpha(3), beta(3), gamma(1), delta(1), epsilon(1). CF(0) has three main subunits: a(1), b(2) and c(9-12). The alpha and beta chains form an alternating ring which encloses part of the gamma chain. CF(1) is attached to CF(0) by a central stalk formed by the gamma and epsilon chains, while a peripheral stalk is formed by the delta and b chains.

Its subcellular location is the cell inner membrane. The catalysed reaction is ATP + H2O + 4 H(+)(in) = ADP + phosphate + 5 H(+)(out). Its function is as follows. Produces ATP from ADP in the presence of a proton gradient across the membrane. The alpha chain is a regulatory subunit. The sequence is that of ATP synthase subunit alpha from Proteus mirabilis (strain HI4320).